We begin with the raw amino-acid sequence, 274 residues long: Diaminopimelate epimerase (274 aa).

Residues Asn-11, Gln-44, and Asn-64 each contribute to the substrate site. Catalysis depends on Cys-73, which acts as the Proton donor. Substrate is bound by residues 74-75 (GN), Asn-157, Asn-190, and 208-209 (ER). The active-site Proton acceptor is the Cys-217. Substrate is bound at residue 218–219 (GS).

Belongs to the diaminopimelate epimerase family. As to quaternary structure, homodimer.

The protein localises to the cytoplasm. It catalyses the reaction (2S,6S)-2,6-diaminopimelate = meso-2,6-diaminopimelate. Its pathway is amino-acid biosynthesis; L-lysine biosynthesis via DAP pathway; DL-2,6-diaminopimelate from LL-2,6-diaminopimelate: step 1/1. Catalyzes the stereoinversion of LL-2,6-diaminopimelate (L,L-DAP) to meso-diaminopimelate (meso-DAP), a precursor of L-lysine and an essential component of the bacterial peptidoglycan. The protein is Diaminopimelate epimerase of Pectobacterium carotovorum subsp. carotovorum (strain PC1).